Consider the following 155-residue polypeptide: Ribosome-binding factor A (155 aa).

The protein belongs to the RbfA family. Monomer. Binds 30S ribosomal subunits, but not 50S ribosomal subunits or 70S ribosomes.

It localises to the cytoplasm. In terms of biological role, one of several proteins that assist in the late maturation steps of the functional core of the 30S ribosomal subunit. Associates with free 30S ribosomal subunits (but not with 30S subunits that are part of 70S ribosomes or polysomes). Required for efficient processing of 16S rRNA. May interact with the 5'-terminal helix region of 16S rRNA. The chain is Ribosome-binding factor A from Methylocella silvestris (strain DSM 15510 / CIP 108128 / LMG 27833 / NCIMB 13906 / BL2).